The chain runs to 305 residues: Cytochrome c biogenesis protein CcsA (305 aa).

The next 8 membrane-spanning stretches (helical) occupy residues 11–31, 36–56, 75–95, 97–117, 142–162, 212–232, 239–259, and 273–293; these read ANAS…KAIF, ILQL…ALLL, LMFL…YIQI, FIGF…TFFL, IMMA…AFLF, TIGI…VWAN, WSWD…AIYL, and AIVA…VNLL.

The protein belongs to the CcmF/CycK/Ccl1/NrfE/CcsA family. May interact with Ccs1.

The protein localises to the plastid. Its subcellular location is the chloroplast thylakoid membrane. In terms of biological role, required during biogenesis of c-type cytochromes (cytochrome c6 and cytochrome f) at the step of heme attachment. This chain is Cytochrome c biogenesis protein CcsA, found in Mesostigma viride (Green alga).